The following is a 439-amino-acid chain: Skin secretory protein xP2 (439 aa).

The first 22 residues, 1-22 (MNHKLFCVHFLLLILSVCYIQG), serve as a signal peptide directing secretion. Positions 25–351 (AGGEPAPAEG…VEVGPKTEDC (327 aa)) are disordered. 5 tandem repeats follow at residues 26-33 (GGEPAPAE), 34-41 (GVAPAPAE), 42-51 (GGAPAPAPAE), 52-59 (GEAPAPAE), and 60-69 (GGAPAPAPAE). The 33 X approximate repeats of G-G(0,1)-[EV](0,1)-A-P-[A-P](1,3)-A-E stretch occupies residues 26–343 (GGEPAPAEGV…APAPAPAPVE (318 aa)). Low complexity predominate over residues 26-345 (GGEPAPAEGV…APAPAPVEVG (320 aa)). Residues 70–77 (GAEPAPAD) form a 6; approximate repeat. 9 repeat units span residues 78-87 (GGAPAPAPAE), 88-97 (GGAPAPAPAE), 98-107 (GGAPAPAPAE), 108-115 (GGAPAPAE), 116-125 (GGAPAPAPAE), 126-135 (GEAPAPAPAE), 136-145 (GEAPAPAPAE), 146-153 (GEAPAPAE), and 154-163 (GEAPAPAPAE). A 16; approximate repeat occupies 164-173 (VEAPAPAPAE). Repeat copies occupy residues 174-183 (GEAPAPAPAE), 184-193 (GEAPAPAPAE), 194-203 (GEAPAPAPAE), 204-215 (GEAPAPAPAPAE), 216-225 (GEAPAPAPAE), 226-235 (GEAPAPAPAE), 236-245 (GEAPAPAPAE), 246-255 (GEAPAPAPAE), 256-265 (GEAPAPAPAE), 266-275 (GEAPAPAPAE), 276-285 (GEAPAPAPAE), 286-293 (GEAPAPAE), 294-303 (GEAPAPAPAE), and 304-313 (GEAPAPAPAE). One copy of the 31; approximate repeat lies at 314–321 (GGAPSPAE). Residues 322-331 (GGAPAAAPAE) form a 32; approximate repeat. Residues 332–343 (GGAPAPAPAPVE) form a 33; approximate repeat. P-type domains are found at residues 349-392 (EDCK…FFPR) and 396-439 (AQCL…FHQK). Intrachain disulfides connect Cys351–Cys377, Cys361–Cys376, Cys371–Cys388, Cys398–Cys424, Cys408–Cys423, and Cys418–Cys435.

In terms of tissue distribution, skin.

The protein localises to the secreted. Its function is as follows. May act as a growth factor in the germinal layer of the epidermis. May also be involved in growth of regenerating glands and in protection of the skin from the external environment. The sequence is that of Skin secretory protein xP2 (p2) from Xenopus laevis (African clawed frog).